Reading from the N-terminus, the 295-residue chain is Bifunctional protein FolD (295 aa).

NADP(+) contacts are provided by residues Gly-165 to Ser-167, Ser-190, and Ile-231.

It belongs to the tetrahydrofolate dehydrogenase/cyclohydrolase family. As to quaternary structure, homodimer.

The catalysed reaction is (6R)-5,10-methylene-5,6,7,8-tetrahydrofolate + NADP(+) = (6R)-5,10-methenyltetrahydrofolate + NADPH. It carries out the reaction (6R)-5,10-methenyltetrahydrofolate + H2O = (6R)-10-formyltetrahydrofolate + H(+). It functions in the pathway one-carbon metabolism; tetrahydrofolate interconversion. Its function is as follows. Catalyzes the oxidation of 5,10-methylenetetrahydrofolate to 5,10-methenyltetrahydrofolate and then the hydrolysis of 5,10-methenyltetrahydrofolate to 10-formyltetrahydrofolate. This Nitrosomonas europaea (strain ATCC 19718 / CIP 103999 / KCTC 2705 / NBRC 14298) protein is Bifunctional protein FolD.